A 201-amino-acid polypeptide reads, in one-letter code: Probable quinol oxidase subunit 3 (201 aa).

5 helical membrane passes run 20 to 40, 62 to 82, 91 to 111, 133 to 153, and 172 to 192; these read LGFW…FATL, LILI…IAIY, LMMF…GFEI, FFIL…WVIC, and FIVS…FTAV.

Belongs to the cytochrome c oxidase subunit 3 family.

It is found in the cell membrane. The enzyme catalyses 2 a quinol + O2 = 2 a quinone + 2 H2O. Its function is as follows. Catalyzes quinol oxidation with the concomitant reduction of oxygen to water. The polypeptide is Probable quinol oxidase subunit 3 (qoxC) (Staphylococcus epidermidis (strain ATCC 35984 / DSM 28319 / BCRC 17069 / CCUG 31568 / BM 3577 / RP62A)).